The primary structure comprises 850 residues: Protein SEY1 (850 aa).

The tract at residues 1-27 is disordered; the sequence is MSDLPPPDLGSEEISVSPTSSSSSFVP. The Cytoplasmic segment spans residues 1 to 741; the sequence is MSDLPPPDLG…KRALIQHVTH (741 aa). Low complexity predominate over residues 12-27; sequence EEISVSPTSSSSSFVP. In terms of domain architecture, GB1/RHD3-type G spans 64–297; sequence NNNYHIVSVF…NEDFLFKKYY (234 aa). 74 to 81 serves as a coordination point for GTP; it reads GSQSTGKS. Residues 742-762 form a helical membrane-spanning segment; sequence IPYYIYIVILVLGWNEFMAVL. Topologically, residues 763–765 are lumenal; sequence RNP. A helical transmembrane segment spans residues 766-786; sequence FFFTLLLMLGAGTYVLYHLNL. At 787–850 the chain is on the cytoplasmic side; the sequence is LKPAMVVVQR…SDLTPPGEGS (64 aa). Residues 816-850 form a disordered region; sequence QPQEHAKRLSKMAGITEDKPEEIEMSDLTPPGEGS.

It belongs to the TRAFAC class dynamin-like GTPase superfamily. GB1/RHD3 GTPase family. RHD3 subfamily.

Its subcellular location is the endoplasmic reticulum membrane. Cooperates with the reticulon proteins and tubule-shaping DP1 family proteins to generate and maintain the structure of the tubular endoplasmic reticulum network. Has GTPase activity, which is required for its function in ER organization. The protein is Protein SEY1 of Meyerozyma guilliermondii (strain ATCC 6260 / CBS 566 / DSM 6381 / JCM 1539 / NBRC 10279 / NRRL Y-324) (Yeast).